Reading from the N-terminus, the 353-residue chain is Photosystem II D2 protein (353 aa).

Position 2 is an N-acetylthreonine (T2). At T2 the chain carries Phosphothreonine. A helical membrane pass occupies residues 41-61 (TAYFALGGWFTGTTFVTSWYT). Chlorophyll a is bound at residue H118. A helical membrane pass occupies residues 125-141 (GFMLRQFELARSVQLRP). 2 residues coordinate pheophytin a: Q130 and N143. Residues 153 to 166 (VFVSVFLIYPLGQS) form a helical membrane-spanning segment. H198 contributes to the chlorophyll a binding site. A helical membrane pass occupies residues 208–228 (AALLCAIHGATVENTLFEDGD). Positions 215 and 262 each coordinate a plastoquinone. H215 provides a ligand contact to Fe cation. Fe cation is bound at residue H269. The helical transmembrane segment at 279-295 (GLWMSAIGVVGLALNLR) threads the bilayer.

Belongs to the reaction center PufL/M/PsbA/D family. PSII is composed of 1 copy each of membrane proteins PsbA, PsbB, PsbC, PsbD, PsbE, PsbF, PsbH, PsbI, PsbJ, PsbK, PsbL, PsbM, PsbT, PsbX, PsbY, PsbZ, Psb30/Ycf12, at least 3 peripheral proteins of the oxygen-evolving complex and a large number of cofactors. It forms dimeric complexes. The D1/D2 heterodimer binds P680, chlorophylls that are the primary electron donor of PSII, and subsequent electron acceptors. It shares a non-heme iron and each subunit binds pheophytin, quinone, additional chlorophylls, carotenoids and lipids. There is also a Cl(-1) ion associated with D1 and D2, which is required for oxygen evolution. The PSII complex binds additional chlorophylls, carotenoids and specific lipids. is required as a cofactor.

It localises to the plastid. The protein resides in the chloroplast thylakoid membrane. The catalysed reaction is 2 a plastoquinone + 4 hnu + 2 H2O = 2 a plastoquinol + O2. In terms of biological role, photosystem II (PSII) is a light-driven water:plastoquinone oxidoreductase that uses light energy to abstract electrons from H(2)O, generating O(2) and a proton gradient subsequently used for ATP formation. It consists of a core antenna complex that captures photons, and an electron transfer chain that converts photonic excitation into a charge separation. The D1/D2 (PsbA/PsbD) reaction center heterodimer binds P680, the primary electron donor of PSII as well as several subsequent electron acceptors. D2 is needed for assembly of a stable PSII complex. The protein is Photosystem II D2 protein of Adiantum capillus-veneris (Maidenhair fern).